A 391-amino-acid polypeptide reads, in one-letter code: Multidrug resistance protein MdtL (391 aa).

Topologically, residues 1–3 are cytoplasmic; that stretch reads MSR. The helical transmembrane segment at 4–24 threads the bilayer; the sequence is FLICSFALVLLYPAGIDMYLV. The Periplasmic segment spans residues 25 to 37; that stretch reads GLPRIAADLNASE. The helical transmembrane segment at 38–58 threads the bilayer; the sequence is AQLHIAFSVYLAGMAAAMLFA. The Cytoplasmic segment spans residues 59 to 75; that stretch reads GKMADRSGRKPVAIPGS. A helical transmembrane segment spans residues 76–96; the sequence is ALFIIASVFCSLAETSTLFLA. Topologically, residues 97–98 are periplasmic; that stretch reads GR. The helical transmembrane segment at 99–119 threads the bilayer; sequence FLQGLGAGCCYVVAFAILRDT. Over 120 to 130 the chain is Cytoplasmic; sequence LDDRRRAKVLS. Residues 131–151 form a helical membrane-spanning segment; the sequence is LLNGITCIIPVLAPVLGHLIM. Residues 152–157 are Periplasmic-facing; sequence LKFPWQ. A helical transmembrane segment spans residues 158-178; sequence SLFWAMAMMGIAVLMLSLFIL. The Cytoplasmic segment spans residues 179-202; that stretch reads KETRPASPAASDKPRENSESLLNR. Residues 203–222 traverse the membrane as a helical segment; that stretch reads FFLSRVVITTLSVSVILTFV. At 223–244 the chain is on the periplasmic side; that stretch reads NTSPVLLMEIMGFERGEYATIM. The chain crosses the membrane as a helical span at residues 245–265; sequence ALTAGVSMTFSFSTPFALGIF. Over 266-268 the chain is Cytoplasmic; the sequence is KPR. The helical transmembrane segment at 269-289 threads the bilayer; the sequence is TLMITSQVLFLAAGITLAVSP. Residues 290-292 are Periplasmic-facing; it reads SHA. The chain crosses the membrane as a helical span at residues 293-313; sequence VSLFGITLICAGFSVGFGVAM. Residues 314–330 are Cytoplasmic-facing; the sequence is SQALGPFSLRAGVASST. Residues 331 to 351 traverse the membrane as a helical segment; it reads LGIAQVCGSSLWIWLAAVVGI. The Periplasmic segment spans residues 352-355; the sequence is GAWN. Residues 356–376 form a helical membrane-spanning segment; sequence MLIGILIACSIVSLLLIMFVA. Residues 377–391 lie on the Cytoplasmic side of the membrane; that stretch reads PGRPVAAHEEIHHHA.

Belongs to the major facilitator superfamily. DHA1 family. MdtL (TC 2.A.1.2.22) subfamily.

It localises to the cell inner membrane. The sequence is that of Multidrug resistance protein MdtL from Shigella flexneri serotype 5b (strain 8401).